The primary structure comprises 503 residues: Catalase (503 aa).

The N-terminal stretch at 1 to 21 is a signal peptide; it reads MHMSKSFLIISMGFVAVSVQA. Residues His72 and Asn145 contribute to the active site. Tyr353 contacts heme.

The protein belongs to the catalase family. Requires heme as cofactor.

Its subcellular location is the periplasm. It catalyses the reaction 2 H2O2 = O2 + 2 H2O. In terms of biological role, decomposes hydrogen peroxide into water and oxygen; serves to protect cells from the toxic effects of hydrogen peroxide. This chain is Catalase, found in Vibrio cholerae serotype O1 (strain ATCC 39315 / El Tor Inaba N16961).